The primary structure comprises 324 residues: GDP-mannose transporter (324 aa).

The Cytoplasmic portion of the chain corresponds to 1 to 13; the sequence is MSELKSRIGNSGS. A helical membrane pass occupies residues 14–34; sequence IANSGPVSILCYCASSILMTV. Topologically, residues 35 to 44 are lumenal; that stretch reads TNKFVVNTDG. The chain crosses the membrane as a helical span at residues 45–65; sequence FNMFFVMLFAQSLVCTMCLMV. The Cytoplasmic portion of the chain corresponds to 66–76; sequence LKMFGYAKYRP. A helical transmembrane segment spans residues 77–97; sequence LNLIDVKNWLPISFLLVFMIF. At 98–116 the chain is on the lumenal side; the sequence is TSAKALKYMPVPIYTIFKN. N-linked (GlcNAc...) asparagine glycosylation is present at Asn-116. The helical transmembrane segment at 117 to 137 threads the bilayer; that stretch reads LTIILIAYGEVLFFGGSVTPM. Position 138 (Glu-138) is a topological domain, cytoplasmic. The chain crosses the membrane as a helical span at residues 139–159; it reads LSSFILMVLSSVVASLGDQQA. Topologically, residues 160 to 170 are lumenal; sequence AKIAQPLANNS. A glycan (N-linked (GlcNAc...) asparagine) is linked at Asn-168. Residues 171–191 traverse the membrane as a helical segment; sequence ILSPEYYWMFLNCICSASFVL. Over 192-204 the chain is Cytoplasmic; sequence IMRKRIKLTNFKD. Residues 205–225 traverse the membrane as a helical segment; that stretch reads YDTMFYNNALALPILLGFSFL. The Lumenal portion of the chain corresponds to 226-243; the sequence is SEDWSSENLAQNFSGESL. Asn-237 carries an N-linked (GlcNAc...) asparagine glycan. A helical membrane pass occupies residues 244-264; the sequence is SAMIISGMTSVGISYCSGWCV. The Cytoplasmic portion of the chain corresponds to 265–270; sequence RATSST. A helical transmembrane segment spans residues 271-291; the sequence is TYSMVGALNKLPIALAGLIFF. The Lumenal segment spans residues 292–295; the sequence is DAPR. Residues 296–316 form a helical membrane-spanning segment; the sequence is NFLSIMSIFIGFASGLSYAVA. At 317–324 the chain is on the cytoplasmic side; that stretch reads KQKKVQKN.

This sequence belongs to the TPT transporter family. SLC35D subfamily. In terms of assembly, homooligomer.

Its subcellular location is the golgi apparatus membrane. It is found in the cytoplasmic vesicle membrane. The protein localises to the endoplasmic reticulum membrane. In terms of biological role, involved in the import of GDP-mannose from the cytoplasm into the Golgi lumen. In Candida glabrata (strain ATCC 2001 / BCRC 20586 / JCM 3761 / NBRC 0622 / NRRL Y-65 / CBS 138) (Yeast), this protein is GDP-mannose transporter (VRG4).